Consider the following 275-residue polypeptide: NH(3)-dependent NAD(+) synthetase (275 aa).

50-57 provides a ligand contact to ATP; that stretch reads GISGGVDS. Mg(2+) is bound at residue aspartate 56. Arginine 147 provides a ligand contact to deamido-NAD(+). Residue threonine 167 participates in ATP binding. Glutamate 172 provides a ligand contact to Mg(2+). 2 residues coordinate deamido-NAD(+): lysine 180 and aspartate 187. Positions 196 and 218 each coordinate ATP. Deamido-NAD(+) is bound at residue 267–268; sequence HK.

The protein belongs to the NAD synthetase family. In terms of assembly, homodimer.

The catalysed reaction is deamido-NAD(+) + NH4(+) + ATP = AMP + diphosphate + NAD(+) + H(+). The protein operates within cofactor biosynthesis; NAD(+) biosynthesis; NAD(+) from deamido-NAD(+) (ammonia route): step 1/1. In terms of biological role, catalyzes the ATP-dependent amidation of deamido-NAD to form NAD. Uses ammonia as a nitrogen source. This is NH(3)-dependent NAD(+) synthetase from Pseudomonas aeruginosa (strain LESB58).